Here is a 201-residue protein sequence, read N- to C-terminus: Dephospho-CoA kinase (201 aa).

The 198-residue stretch at 4-201 (SVGLTGNIAS…KYLREAKIKQ (198 aa)) folds into the DPCK domain. Residue 12 to 17 (ASGKST) participates in ATP binding.

This sequence belongs to the CoaE family.

Its subcellular location is the cytoplasm. It catalyses the reaction 3'-dephospho-CoA + ATP = ADP + CoA + H(+). It participates in cofactor biosynthesis; coenzyme A biosynthesis; CoA from (R)-pantothenate: step 5/5. Functionally, catalyzes the phosphorylation of the 3'-hydroxyl group of dephosphocoenzyme A to form coenzyme A. The polypeptide is Dephospho-CoA kinase (Legionella pneumophila (strain Paris)).